A 784-amino-acid polypeptide reads, in one-letter code: Ribosome biogenesis protein BOP1 homolog (784 aa).

Positions 1–11 (MTKKLALKRKG) are enriched in basic residues. The segment at 1–159 (MTKKLALKRK…DSDTSDEEDI (159 aa)) is disordered. 4 stretches are compositionally biased toward acidic residues: residues 27 to 36 (SENEEEEEDL), 45 to 54 (EDSTDDEGID), 62 to 73 (SEELQFESDEEG), and 84 to 111 (AEED…EDEE). Over residues 112-123 (KDSKLKQSDDKP) the composition is skewed to basic and acidic residues. Residues 124–133 (SSSGAASKKA) show a composition bias toward low complexity. Positions 138-148 (LSKRDTSKPEY) are enriched in basic and acidic residues. Over residues 149-158 (QDSDTSDEED) the composition is skewed to acidic residues. 7 WD repeats span residues 445–486 (GHTD…RTIE), 488–526 (DEVV…KVLV), 570–612 (THFK…SQIP), 615–653 (KSKG…LVKK), 656–695 (TNSK…KPYQ), 699–738 (LHRN…DLLQ), and 754–784 (RDEF…RLYT).

It belongs to the WD repeat BOP1/ERB1 family.

The protein localises to the nucleus. The protein resides in the nucleolus. Its subcellular location is the nucleoplasm. Its function is as follows. Required for maturation of ribosomal RNAs and formation of the large ribosomal subunit. This Drosophila erecta (Fruit fly) protein is Ribosome biogenesis protein BOP1 homolog.